Reading from the N-terminus, the 511-residue chain is Maturase K (511 aa).

Belongs to the intron maturase 2 family. MatK subfamily.

Its subcellular location is the plastid. The protein localises to the chloroplast. Functionally, usually encoded in the trnK tRNA gene intron. Probably assists in splicing its own and other chloroplast group II introns. This chain is Maturase K, found in Chloranthus spicatus (Chulantree).